The chain runs to 472 residues: Argininosuccinate lyase (472 aa).

It belongs to the lyase 1 family. Argininosuccinate lyase subfamily.

It is found in the cytoplasm. It carries out the reaction 2-(N(omega)-L-arginino)succinate = fumarate + L-arginine. It functions in the pathway amino-acid biosynthesis; L-arginine biosynthesis; L-arginine from L-ornithine and carbamoyl phosphate: step 3/3. This is Argininosuccinate lyase from Polynucleobacter necessarius subsp. necessarius (strain STIR1).